Consider the following 171-residue polypeptide: UPF0398 protein MGAS9429_Spy1349 (171 aa).

Belongs to the UPF0398 family.

In Streptococcus pyogenes serotype M12 (strain MGAS9429), this protein is UPF0398 protein MGAS9429_Spy1349.